We begin with the raw amino-acid sequence, 183 residues long: Ribosome-recycling factor (183 aa).

It belongs to the RRF family.

The protein localises to the cytoplasm. Its function is as follows. Responsible for the release of ribosomes from messenger RNA at the termination of protein biosynthesis. May increase the efficiency of translation by recycling ribosomes from one round of translation to another. In Buchnera aphidicola subsp. Baizongia pistaciae (strain Bp), this protein is Ribosome-recycling factor.